Here is a 245-residue protein sequence, read N- to C-terminus: Galectin-3 (245 aa).

Residues 1 to 30 (MADGFSLNDALAGSGNPNPQGWPGAWGNQP) form a disordered region. Position 2 is an N-acetylalanine (Ala-2). At Ser-6 the chain carries Phosphoserine; by CK1. A run of 4 repeats spans residues 35 to 43 (YPGASYPGA), 44 to 52 (YPGQAPPGA), 53 to 61 (YPGQAPPGA), and 62 to 70 (YPGPTAPGA). The 7 X 9 AA tandem repeats of Y-P-G-X(3)-P-[GS]-A stretch occupies residues 35 to 99 (YPGASYPGAY…PSAPGAYPAA (65 aa)). The disordered stretch occupies residues 47–68 (QAPPGAYPGQAPPGAYPGPTAP). A 5; approximate repeat occupies 71 to 78 (YPGPAPGA). Residues 79 to 88 (YPGQPGASGA) form a 6; approximate repeat. The stretch at 89-99 (YPSAPGAYPAA) is one 7; approximate repeat. A Galectin domain is found at 113-243 (YKLPLAGGVM…DITLTSAAPT (131 aa)). Position 176-182 (176-182 (WGREERQ)) interacts with a beta-D-galactoside. Ser-183 carries the post-translational modification Phosphoserine. Residues 221–236 (KNLREINQMEISGDIT) carry the Nuclear export signal motif.

In terms of assembly, probably forms homo- or heterodimers. Interacts with DMBT1. Interacts with CD6 and ALCAM. Forms a complex with the ITGA3, ITGB1 and CSPG4. Interacts with LGALS3BP, LYPD3, ZFTRAF1 and UACA. Interacts with TRIM16; this interaction mediates autophagy of damage endomembranes. Interacts with cargo receptor TMED10; the interaction mediates the translocation from the cytoplasm into the ERGIC (endoplasmic reticulum-Golgi intermediate compartment) and thereby secretion. Interacts with and inhibits by binding NCR3/NKp30.

The protein resides in the cytoplasm. The protein localises to the nucleus. It is found in the secreted. In terms of biological role, galactose-specific lectin which binds IgE. May mediate with the alpha-3, beta-1 integrin the stimulation by CSPG4 of endothelial cells migration. Together with DMBT1, required for terminal differentiation of columnar epithelial cells during early embryogenesis. In the nucleus: acts as a pre-mRNA splicing factor. Involved in acute inflammatory responses including neutrophil activation and adhesion, chemoattraction of monocytes macrophages, opsonization of apoptotic neutrophils, and activation of mast cells. Together with TRIM16, coordinates the recognition of membrane damage with mobilization of the core autophagy regulators ATG16L1 and BECN1 in response to damaged endomembranes. When secreted, interacts with NK cell-activating receptor NCR3/NKp30 acting as an inhibitory ligand which antagonizes NK cell attack. In Cricetulus longicaudatus (Long-tailed dwarf hamster), this protein is Galectin-3 (LGALS3).